The following is a 606-amino-acid chain: Alpha-1,2-mannosyltransferase MNN23 (606 aa).

Topologically, residues 1–14 (MSINFLSIPRNRFK) are cytoplasmic. Residues 15–35 (AIGVLSVTCILIYVILHSSII) form a helical membrane-spanning segment. Residues 36-606 (TTDFDVSDYG…QVAWLSKSQN (571 aa)) are Extracellular-facing. Positions 59–86 (DNGENLKDPQPELDNDKGNGETDTTTSN) are disordered. Residues 62 to 78 (ENLKDPQPELDNDKGNG) show a composition bias toward basic and acidic residues.

This sequence belongs to the MNN1/MNT family.

Its subcellular location is the golgi apparatus membrane. The protein operates within protein modification; protein glycosylation. Alpha-1,2-mannosyltransferase required for cell wall integrity. Responsible for addition of the first alpha-1,2-linked mannose to form the branches on the mannan backbone of oligosaccharides. Addition of alpha-1,2-mannose is required for stabilization of the alpha-1,6-mannose backbone and hence regulates mannan fibril length; and is important for both immune recognition and virulence. This Candida albicans (strain SC5314 / ATCC MYA-2876) (Yeast) protein is Alpha-1,2-mannosyltransferase MNN23 (MNN23).